The following is a 156-amino-acid chain: Type II secretion system core protein G (156 aa).

The propeptide at 1 to 22 (MQQSQRGCGQNSYGQSGYRQRG) is leader sequence. F23 carries the N-methylphenylalanine modification. A helical transmembrane segment spans residues 23–43 (FTLLEIMVVIVILGVLASLVV).

This sequence belongs to the GSP G family. As to quaternary structure, type II secretion system is composed of four main components: the outer membrane complex, the inner membrane complex, the cytoplasmic secretion ATPase and the periplasm-spanning pseudopilus. Forms homomultimers. In terms of processing, cleaved by the prepilin peptidase. Post-translationally, methylated by prepilin peptidase at the amino group of the N-terminal phenylalanine once the leader sequence is cleaved.

Its subcellular location is the cell inner membrane. In terms of biological role, core component of the type II secretion system required for the energy-dependent secretion of extracellular factors such as proteases and toxins from the periplasm. Pseudopilin (pilin-like) protein that polymerizes to form the pseudopilus. Further polymerization triggers pseudopilus growth. In Pectobacterium carotovorum subsp. carotovorum (Erwinia carotovora subsp. carotovora), this protein is Type II secretion system core protein G (outG).